A 60-amino-acid polypeptide reads, in one-letter code: Ras-related protein Rab-2A (60 aa).

GTP is bound by residues S1, C2, and T19. S1 is a binding site for Mg(2+). The short motif at 16-24 is the Effector region element; the sequence is HDLTIGVEF. Residue T19 coordinates Mg(2+).

This sequence belongs to the small GTPase superfamily. Rab family. As to quaternary structure, interacts with PRKCI. Interacts with TRIP11. Interacts (in GTP-bound form) with GARIN1B. Interacts (GTP-bound) with HOPS complex component VPS39; interaction contributes to obtaining a functional HOPS complex that promotes autophagosome-lysosome membrane fusion driven by STX17-SNAP29-VAMP8. May interact with VPS41. The cofactor is Mg(2+). In terms of processing, prenylated. Prenylation is required for association with cellular membranes.

The protein resides in the endoplasmic reticulum-Golgi intermediate compartment membrane. The protein localises to the melanosome. Its subcellular location is the endoplasmic reticulum membrane. It is found in the golgi apparatus membrane. It localises to the cytoplasmic vesicle. The protein resides in the secretory vesicle. The protein localises to the acrosome. Its subcellular location is the autophagosome membrane. The enzyme catalyses GTP + H2O = GDP + phosphate + H(+). Its activity is regulated as follows. Regulated by guanine nucleotide exchange factors (GEFs) which promote the exchange of bound GDP for free GTP, GTPase activating proteins (GAPs) which increase the GTP hydrolysis activity, and GDP dissociation inhibitors (GDIs) which inhibit the dissociation of the nucleotide from the GTPase. The small GTPases Rab are key regulators of intracellular membrane trafficking, from the formation of transport vesicles to their fusion with membranes. Rabs cycle between active GTP-bound and inactive GDP-bound states. In their active state, drive transport of vesicular carriers from donor organelles to acceptor organelles to regulate the membrane traffic that maintains organelle identity and morphology. RAB2A regulates autophagy by promoting autophagosome-lysosome fusion via recruitment of the HOPS endosomal tethering complex; this process involves autophagosomal RAB2A and lysosomal RAB39A recruitment of HOPS subcomplexes VPS39-VPS11 and VPS41-VPS16-VPS18-VPS33A, respectively, which assemble into a functional complex to mediate membrane tethering and SNAREs-driven membrane fusion. Required for protein transport from the endoplasmic reticulum to the Golgi complex. Regulates the compacted morphology of the Golgi. Together with RAB2B, redundantly required for efficient autophagic flux. This Mesocricetus auratus (Golden hamster) protein is Ras-related protein Rab-2A.